Consider the following 77-residue polypeptide: MKLTCMMIVAVLFLTAWTFATAEDPRNGLENLFSKAHHEMKNPEDSKLNKRCVKYLDPCDMLRHTCCFGLCVLIACI.

The signal sequence occupies residues 1–22 (MKLTCMMIVAVLFLTAWTFATA). Residues 23-49 (EDPRNGLENLFSKAHHEMKNPEDSKLN) constitute a propeptide that is removed on maturation. 3 disulfides stabilise this stretch: C52–C67, C59–C71, and C66–C76.

The protein belongs to the conotoxin O1 superfamily. As to expression, expressed by the venom duct.

It is found in the secreted. This is Conotoxin PnMKLT1-0122 from Conus pennaceus (Feathered cone).